A 378-amino-acid polypeptide reads, in one-letter code: Heat-inducible transcription repressor HrcA (378 aa).

The protein belongs to the HrcA family.

Its function is as follows. Negative regulator of class I heat shock genes (grpE-dnaK-dnaJ and groELS operons). Prevents heat-shock induction of these operons. The sequence is that of Heat-inducible transcription repressor HrcA from Synechocystis sp. (strain ATCC 27184 / PCC 6803 / Kazusa).